The sequence spans 107 residues: Nucleoid-associated protein MCA1327 (107 aa).

Belongs to the YbaB/EbfC family. As to quaternary structure, homodimer.

It localises to the cytoplasm. The protein localises to the nucleoid. In terms of biological role, binds to DNA and alters its conformation. May be involved in regulation of gene expression, nucleoid organization and DNA protection. This is Nucleoid-associated protein MCA1327 from Methylococcus capsulatus (strain ATCC 33009 / NCIMB 11132 / Bath).